The chain runs to 198 residues: Phosphoheptose isomerase (198 aa).

Residues 34–196 (IVEALIRGNK…DDSLFPADHG (163 aa)) enclose the SIS domain. Substrate is bound at residue 49 to 51 (NGG). Zn(2+) is bound by residues His58 and Asn62. Residues Asn62, 91 to 92 (ND), 117 to 119 (STS), Ser122, and Gln172 each bind substrate. 2 residues coordinate Zn(2+): Gln172 and His180.

It belongs to the SIS family. GmhA subfamily. As to quaternary structure, homotetramer. Zn(2+) is required as a cofactor.

It localises to the cytoplasm. The catalysed reaction is 2 D-sedoheptulose 7-phosphate = D-glycero-alpha-D-manno-heptose 7-phosphate + D-glycero-beta-D-manno-heptose 7-phosphate. Its pathway is carbohydrate biosynthesis; D-glycero-D-manno-heptose 7-phosphate biosynthesis; D-glycero-alpha-D-manno-heptose 7-phosphate and D-glycero-beta-D-manno-heptose 7-phosphate from sedoheptulose 7-phosphate: step 1/1. In terms of biological role, catalyzes the isomerization of sedoheptulose 7-phosphate in D-glycero-D-manno-heptose 7-phosphate. The sequence is that of Phosphoheptose isomerase from Alteromonas mediterranea (strain DSM 17117 / CIP 110805 / LMG 28347 / Deep ecotype).